A 681-amino-acid polypeptide reads, in one-letter code: Rabphilin-3A (681 aa).

The tract at residues M1 to D21 is disordered. One can recognise a RabBD domain in the interval Q40–G157. The FYVE-type zinc finger occupies G88–E145. 8 residues coordinate Zn(2+): C94, C97, C111, C114, C119, C122, C137, and C140. A disordered region spans residues V162–D375. The span at A199 to P208 shows a compositional bias: basic and acidic residues. R223 carries the omega-N-methylarginine modification. Basic and acidic residues predominate over residues R243–H252. Phosphoserine is present on S271. Over residues A278–P296 the composition is skewed to pro residues. Residues A347 to A356 are compositionally biased toward low complexity. Residues A362–D375 are compositionally biased toward acidic residues. One can recognise a C2 1 domain in the interval T379–I501. Residues M409, D410, D416, D471, E472, D473, E479, E526, D568, D574, D628, Y629, D630, and D636 each contribute to the Ca(2+) site. The C2 2 domain occupies E537–H670. Phosphoserine occurs at positions 679 and 680.

As to quaternary structure, interacts with RAB3B, RAB3C, RAB3D, RAB8A, RAB27A and RAB27B. Interacts with RAB3A; this interaction recruits RPH3A to synaptic vesicules. Interacts (via C2B domain) with SNAP25. Interacts with deubiquitinating enzyme CAND1; this interaction results in the deubiquitination of RPH3A. Interacts with GRIN2A and DLG4; this ternary complex regulates NMDA receptor composition at postsynaptic membranes. Interacts with SNCA. Ca(2+) serves as cofactor. Post-translationally, ubiquitinated. Deubiquitinated by CAND1 to prevent its degradation. As to expression, specifically expressed in brain.

It localises to the cytoplasmic vesicle. It is found in the secretory vesicle. The protein localises to the synaptic vesicle membrane. Its subcellular location is the cell projection. The protein resides in the dendritic spine. It localises to the postsynaptic cell membrane. It is found in the membrane. In terms of biological role, plays an essential role in docking and fusion steps of regulated exocytosis. At the presynaptic level, RPH3A is recruited by RAB3A to the synaptic vesicle membrane in a GTP-dependent manner where it modulates synaptic vesicle trafficking and calcium-triggered neurotransmitter release. In the post-synaptic compartment, forms a ternary complex with GRIN2A and DLG4 and regulates NMDA receptor stability. Also plays a role in the exocytosis of arginine vasopressin hormone. This Mus musculus (Mouse) protein is Rabphilin-3A (Rph3a).